A 288-amino-acid chain; its full sequence is Probable ketoamine kinase VV1_2562 (288 aa).

Residue 92–94 (NFL) coordinates ATP. Residue Asp195 is the Proton acceptor of the active site.

Belongs to the fructosamine kinase family.

Functionally, ketoamine kinase that phosphorylates ketoamines on the third carbon of the sugar moiety to generate ketoamine 3-phosphate. The chain is Probable ketoamine kinase VV1_2562 from Vibrio vulnificus (strain CMCP6).